The chain runs to 135 residues: Fatty acid-binding protein 5 (135 aa).

The residue at position 2 (Ala2) is an N-acetylalanine. Lys17 is subject to N6-acetyllysine. Positions 24–34 (KELGVGIALRK) match the Nuclear localization signal motif. N-eicosanoyl ethanolamine-binding residues include Cys43 and Arg109. Cysteines 120 and 127 form a disulfide. Residue 129-131 (RIY) participates in (9Z,12Z)-octadecadienoate binding. Tyr131 provides a ligand contact to N-eicosanoyl ethanolamine. Residue Tyr131 coordinates hexadecanoate. Tyr131 is subject to Phosphotyrosine.

The protein belongs to the calycin superfamily. Fatty-acid binding protein (FABP) family. Monomer. Homodimer. In terms of tissue distribution, keratinocytes; highly expressed in psoriatic skin. Expressed in brain gray matter.

Its subcellular location is the cytoplasm. The protein resides in the nucleus. It is found in the synapse. It localises to the postsynaptic density. The protein localises to the secreted. It catalyses the reaction hexadecanoate(out) = hexadecanoate(in). The catalysed reaction is (9Z,12Z)-octadecadienoate(out) = (9Z,12Z)-octadecadienoate(in). The enzyme catalyses (9Z)-octadecenoate(out) = (9Z)-octadecenoate(in). Its function is as follows. Intracellular carrier for long-chain fatty acids and related active lipids, such as endocannabinoids, that regulate the metabolism and actions of the ligands they bind. In addition to the cytosolic transport, selectively delivers specific fatty acids from the cytosol to the nucleus, wherein they activate nuclear receptors. Delivers retinoic acid to the nuclear receptor peroxisome proliferator-activated receptor delta; which promotes proliferation and survival. May also serve as a synaptic carrier of endocannabinoid at central synapses and thus controls retrograde endocannabinoid signaling. Modulates inflammation by regulating PTGES induction via NF-kappa-B activation, and prostaglandin E2 (PGE2) biosynthesis during inflammation. May be involved in keratinocyte differentiation. This is Fatty acid-binding protein 5 from Homo sapiens (Human).